We begin with the raw amino-acid sequence, 158 residues long: Protein Smg homolog (158 aa).

The protein belongs to the Smg family.

The polypeptide is Protein Smg homolog (Vibrio cholerae serotype O1 (strain ATCC 39315 / El Tor Inaba N16961)).